We begin with the raw amino-acid sequence, 656 residues long: uncharacterized protein (656 aa).

A disordered region spans residues 623-656 (EIDIPGTPASIDPEWSRPPGSITDDHVFDAPLHR). Basic and acidic residues predominate over residues 645 to 656 (TDDHVFDAPLHR).

This is an uncharacterized protein from Mycobacterium tuberculosis (strain ATCC 25618 / H37Rv).